The sequence spans 311 residues: Methionyl-tRNA formyltransferase (311 aa).

110–113 (SLLP) lines the (6S)-5,6,7,8-tetrahydrofolate pocket.

It belongs to the Fmt family.

It catalyses the reaction L-methionyl-tRNA(fMet) + (6R)-10-formyltetrahydrofolate = N-formyl-L-methionyl-tRNA(fMet) + (6S)-5,6,7,8-tetrahydrofolate + H(+). In terms of biological role, attaches a formyl group to the free amino group of methionyl-tRNA(fMet). The formyl group appears to play a dual role in the initiator identity of N-formylmethionyl-tRNA by promoting its recognition by IF2 and preventing the misappropriation of this tRNA by the elongation apparatus. In Acidobacterium capsulatum (strain ATCC 51196 / DSM 11244 / BCRC 80197 / JCM 7670 / NBRC 15755 / NCIMB 13165 / 161), this protein is Methionyl-tRNA formyltransferase.